The chain runs to 117 residues: UPF0231 protein HI_1724 (117 aa).

The protein belongs to the UPF0231 family.

The chain is UPF0231 protein HI_1724 from Haemophilus influenzae (strain ATCC 51907 / DSM 11121 / KW20 / Rd).